A 187-amino-acid chain; its full sequence is Elongation factor P (187 aa).

Belongs to the elongation factor P family.

The protein localises to the cytoplasm. The protein operates within protein biosynthesis; polypeptide chain elongation. In terms of biological role, involved in peptide bond synthesis. Stimulates efficient translation and peptide-bond synthesis on native or reconstituted 70S ribosomes in vitro. Probably functions indirectly by altering the affinity of the ribosome for aminoacyl-tRNA, thus increasing their reactivity as acceptors for peptidyl transferase. The sequence is that of Elongation factor P (efp) from Treponema pallidum (strain Nichols).